A 426-amino-acid chain; its full sequence is Glutamate-1-semialdehyde 2,1-aminomutase (426 aa).

Lys265 bears the N6-(pyridoxal phosphate)lysine mark.

This sequence belongs to the class-III pyridoxal-phosphate-dependent aminotransferase family. HemL subfamily. Homodimer. Requires pyridoxal 5'-phosphate as cofactor.

Its subcellular location is the cytoplasm. The catalysed reaction is (S)-4-amino-5-oxopentanoate = 5-aminolevulinate. Its pathway is porphyrin-containing compound metabolism; protoporphyrin-IX biosynthesis; 5-aminolevulinate from L-glutamyl-tRNA(Glu): step 2/2. This Akkermansia muciniphila (strain ATCC BAA-835 / DSM 22959 / JCM 33894 / BCRC 81048 / CCUG 64013 / CIP 107961 / Muc) protein is Glutamate-1-semialdehyde 2,1-aminomutase.